A 299-amino-acid polypeptide reads, in one-letter code: Probable lipid kinase YegS (299 aa).

Residues 2-133 enclose the DAGKc domain; the sequence is AEFPASLLIL…IDMAQVNKQT (132 aa). ATP contacts are provided by residues Thr-40, 66–72, and Thr-95; that span reads GDGTINE. Mg(2+)-binding residues include Leu-215, Asp-218, and Leu-220. The active-site Proton acceptor is the Glu-271.

Belongs to the diacylglycerol/lipid kinase family. YegS lipid kinase subfamily. Requires Mg(2+) as cofactor. Ca(2+) serves as cofactor.

It localises to the cytoplasm. Functionally, probably phosphorylates lipids; the in vivo substrate is unknown. This Shigella flexneri protein is Probable lipid kinase YegS.